A 120-amino-acid chain; its full sequence is Chaperonin GroEL (120 aa).

23 to 27 (DGTTT) is an ATP binding site.

Belongs to the chaperonin (HSP60) family. Forms a cylinder of 14 subunits composed of two heptameric rings stacked back-to-back. Interacts with the co-chaperonin GroES.

It is found in the cytoplasm. It catalyses the reaction ATP + H2O + a folded polypeptide = ADP + phosphate + an unfolded polypeptide.. Its function is as follows. Together with its co-chaperonin GroES, plays an essential role in assisting protein folding. The GroEL-GroES system forms a nano-cage that allows encapsulation of the non-native substrate proteins and provides a physical environment optimized to promote and accelerate protein folding. The chain is Chaperonin GroEL from Mycobacterium scrofulaceum.